Here is a 378-residue protein sequence, read N- to C-terminus: Diacetylchitobiose uptake system ATP-binding protein MsiK (378 aa).

The region spanning Val-4–Ile-236 is the ABC transporter domain. ATP is bound at residue Gly-38–Ser-45.

The protein belongs to the ABC transporter superfamily. As to quaternary structure, the DasABC-MsiK complex is composed of two ATP-binding proteins (MsiK), two transmembrane proteins (DasB and DasC) and a solute-binding protein (DasA). The NgcEFG-MsiK complex is composed of two ATP-binding proteins (MsiK), two transmembrane proteins (NgcF and NgcG) and a solute-binding protein (NgcE).

It is found in the cell membrane. Part of the ABC transporter complexes DasABC-MsiK and NgcEFG-MsiK involved in N,N'-diacetylchitobiose ((GlcNAc)2) uptake. Responsible for energy coupling to the transport system. The polypeptide is Diacetylchitobiose uptake system ATP-binding protein MsiK (Streptomyces coelicolor (strain ATCC BAA-471 / A3(2) / M145)).